Here is a 101-residue protein sequence, read N- to C-terminus: Small ribosomal subunit protein uS14 (101 aa).

Belongs to the universal ribosomal protein uS14 family. As to quaternary structure, part of the 30S ribosomal subunit. Contacts proteins S3 and S10.

Binds 16S rRNA, required for the assembly of 30S particles and may also be responsible for determining the conformation of the 16S rRNA at the A site. This chain is Small ribosomal subunit protein uS14, found in Orientia tsutsugamushi (strain Ikeda) (Rickettsia tsutsugamushi).